Reading from the N-terminus, the 400-residue chain is 1-deoxy-D-xylulose 5-phosphate reductoisomerase (400 aa).

NADPH contacts are provided by T17, G18, S19, I20, and N131. K132 contacts 1-deoxy-D-xylulose 5-phosphate. E133 lines the NADPH pocket. Position 157 (D157) interacts with Mn(2+). Positions 158, 159, 188, and 211 each coordinate 1-deoxy-D-xylulose 5-phosphate. E159 is a binding site for Mn(2+). G217 serves as a coordination point for NADPH. Positions 224, 229, 230, and 233 each coordinate 1-deoxy-D-xylulose 5-phosphate. Mn(2+) is bound at residue E233.

This sequence belongs to the DXR family. Requires Mg(2+) as cofactor. Mn(2+) is required as a cofactor.

The enzyme catalyses 2-C-methyl-D-erythritol 4-phosphate + NADP(+) = 1-deoxy-D-xylulose 5-phosphate + NADPH + H(+). The protein operates within isoprenoid biosynthesis; isopentenyl diphosphate biosynthesis via DXP pathway; isopentenyl diphosphate from 1-deoxy-D-xylulose 5-phosphate: step 1/6. Catalyzes the NADPH-dependent rearrangement and reduction of 1-deoxy-D-xylulose-5-phosphate (DXP) to 2-C-methyl-D-erythritol 4-phosphate (MEP). The chain is 1-deoxy-D-xylulose 5-phosphate reductoisomerase from Pseudomonas putida (strain ATCC 700007 / DSM 6899 / JCM 31910 / BCRC 17059 / LMG 24140 / F1).